Here is a 209-residue protein sequence, read N- to C-terminus: SAGA-associated factor 11 homolog 1 (209 aa).

A disordered region spans residues 1–36 (MSRTIVVKNPRTSGKDEDKAQIPSQDELPSGSSGAK). Residues 120–141 (CCCPNCERMVAAVRFAPHLQTC) form an SGF11-type zinc finger. Low complexity predominate over residues 156–166 (LTVSSRSSSTS). The interval 156–209 (LTVSSRSSSTSTGGGQANEKSTDDEDWSLDSRPGKSTKNSRNKGSKKNQKNKLK) is disordered. A compositionally biased stretch (basic residues) spans 193-209 (KNSRNKGSKKNQKNKLK).

This sequence belongs to the SGF11 family. In terms of assembly, component of some SAGA transcription coactivator-HAT complexes, at least composed of Ada2b, not/nonstop, Pcaf/Gcn5, Sgf11 and Spt3. Within the SAGA complex, Sgf11, e(y)2, and not/nonstop form an additional subcomplex of SAGA called the DUB module (deubiquitination module). Interacts directly with not/nonstop. Interacts with the AMEX complex component xmas-2. Interacts with Cbp80; important for promoter recruitment of Sgf11 that is not associated with the DUB module.

It localises to the nucleus. Its subcellular location is the nucleoplasm. The protein localises to the cytoplasm. Its function is as follows. Component of the transcription regulatory histone acetylation (HAT) complex SAGA, a multiprotein complex that activates transcription by remodeling chromatin and mediating histone acetylation and deubiquitination. Within the SAGA complex, participates in a subcomplex that specifically deubiquitinates histone H2B. The SAGA complex is recruited to specific gene promoters by activators, where it is required for transcription. Required for nuclear receptor-mediated transactivation. Binds independently on SAGA to promoters in an RNA-dependent manner. Binds to mRNA and is essential for total mRNA export from the nucleus. Required to counteract heterochromatin silencing. Controls the development of neuronal connectivity in visual system by being required for accurate axon targeting in the optic lobe. Required for expression of ecdysone-induced genes such as br/broad. This Drosophila willistoni (Fruit fly) protein is SAGA-associated factor 11 homolog 1.